The following is a 633-amino-acid chain: Alpha-amylase (633 aa).

Glu123 (nucleophile) is an active-site residue. Asp214 serves as the catalytic Proton donor.

The protein belongs to the glycosyl hydrolase 57 family.

The enzyme catalyses Endohydrolysis of (1-&gt;4)-alpha-D-glucosidic linkages in polysaccharides containing three or more (1-&gt;4)-alpha-linked D-glucose units.. This Pyrococcus horikoshii (strain ATCC 700860 / DSM 12428 / JCM 9974 / NBRC 100139 / OT-3) protein is Alpha-amylase (amyA).